Here is a 434-residue protein sequence, read N- to C-terminus: Trigger factor (434 aa).

The PPIase FKBP-type domain maps to 161 to 246; the sequence is EDRATIDFSG…LKKVEERELP (86 aa).

This sequence belongs to the FKBP-type PPIase family. Tig subfamily.

It is found in the cytoplasm. The enzyme catalyses [protein]-peptidylproline (omega=180) = [protein]-peptidylproline (omega=0). Functionally, involved in protein export. Acts as a chaperone by maintaining the newly synthesized protein in an open conformation. Functions as a peptidyl-prolyl cis-trans isomerase. The chain is Trigger factor from Erwinia tasmaniensis (strain DSM 17950 / CFBP 7177 / CIP 109463 / NCPPB 4357 / Et1/99).